The following is a 154-amino-acid chain: Methylglyoxal synthase (154 aa).

The region spanning 1–154 is the MGS-like domain; the sequence is MELTTRTIAA…RYMQQRLDLK (154 aa). Substrate-binding positions include histidine 19, lysine 23, 45–48, and 65–66; these read TGTT and SG. Aspartate 71 (proton donor/acceptor) is an active-site residue. Substrate is bound at residue histidine 98.

The protein belongs to the methylglyoxal synthase family.

The enzyme catalyses dihydroxyacetone phosphate = methylglyoxal + phosphate. Functionally, catalyzes the formation of methylglyoxal from dihydroxyacetone phosphate. The sequence is that of Methylglyoxal synthase from Yersinia pseudotuberculosis serotype O:1b (strain IP 31758).